The following is a 64-amino-acid chain: Large ribosomal subunit protein bL35 (64 aa).

It belongs to the bacterial ribosomal protein bL35 family.

The sequence is that of Large ribosomal subunit protein bL35 from Vibrio metschnikovii.